A 428-amino-acid polypeptide reads, in one-letter code: Enolase (428 aa).

Gln-163 serves as a coordination point for (2R)-2-phosphoglycerate. Glu-205 functions as the Proton donor in the catalytic mechanism. Residues Asp-242, Glu-286, and Asp-313 each contribute to the Mg(2+) site. Lys-338, Arg-367, Ser-368, and Lys-389 together coordinate (2R)-2-phosphoglycerate. The Proton acceptor role is filled by Lys-338.

It belongs to the enolase family. Mg(2+) is required as a cofactor.

It localises to the cytoplasm. The protein resides in the secreted. Its subcellular location is the cell surface. It catalyses the reaction (2R)-2-phosphoglycerate = phosphoenolpyruvate + H2O. It functions in the pathway carbohydrate degradation; glycolysis; pyruvate from D-glyceraldehyde 3-phosphate: step 4/5. In terms of biological role, catalyzes the reversible conversion of 2-phosphoglycerate (2-PG) into phosphoenolpyruvate (PEP). It is essential for the degradation of carbohydrates via glycolysis. The polypeptide is Enolase (Bordetella avium (strain 197N)).